The following is a 130-amino-acid chain: Histone H2A type 1 (130 aa).

Residues 1–22 form a disordered region; the sequence is MSGRGKQGGKARAKAKSRSSRA. Ser-2 carries the N-acetylserine modification. Ser-2 carries the post-translational modification Phosphoserine; by RPS6KA5. Residue Arg-4 is modified to Citrulline; alternate. At Arg-4 the chain carries Symmetric dimethylarginine; by PRMT5; alternate. N6-(2-hydroxyisobutyryl)lysine is present on Lys-6. Over residues 7–19 the composition is skewed to basic residues; the sequence is QGGKARAKAKSRS. Position 10 is an N6-(2-hydroxyisobutyryl)lysine; alternate (Lys-10). An N6-lactoyllysine; alternate modification is found at Lys-10. Lys-10 carries the post-translational modification N6-succinyllysine; alternate. Residues Lys-14 and Lys-16 each participate in a glycyl lysine isopeptide (Lys-Gly) (interchain with G-Cter in ubiquitin) cross-link. At Lys-37 the chain carries N6-(2-hydroxyisobutyryl)lysine; alternate. The residue at position 37 (Lys-37) is an N6-(beta-hydroxybutyryl)lysine; alternate. The residue at position 37 (Lys-37) is an N6-crotonyllysine; alternate. N6-(2-hydroxyisobutyryl)lysine occurs at positions 75 and 76. Position 96 is an N6-(2-hydroxyisobutyryl)lysine; alternate (Lys-96). N6-succinyllysine; alternate is present on Lys-96. Lys-96 bears the N6-glutaryllysine; alternate mark. Lys-100 carries the post-translational modification N6-glutaryllysine. An N5-methylglutamine modification is found at Gln-105. Lys-119 carries the post-translational modification N6-(2-hydroxyisobutyryl)lysine; alternate. 2 positions are modified to N6-crotonyllysine; alternate: Lys-119 and Lys-120. 2 positions are modified to N6-glutaryllysine; alternate: Lys-119 and Lys-120. Lys-120 is covalently cross-linked (Glycyl lysine isopeptide (Lys-Gly) (interchain with G-Cter in ubiquitin); alternate). The residue at position 121 (Thr-121) is a Phosphothreonine; by DCAF1. Lys-126 carries the post-translational modification N6-crotonyllysine; alternate. Position 126 is an N6-glutaryllysine; alternate (Lys-126).

Belongs to the histone H2A family. The nucleosome is a histone octamer containing two molecules each of H2A, H2B, H3 and H4 assembled in one H3-H4 heterotetramer and two H2A-H2B heterodimers. The octamer wraps approximately 147 bp of DNA. Interacts with VRK1; the interaction is mediated by the nucleosome acidic patch, a cluster of negatively charged residues of H2A and H2B forming a cleft within the nucleosome core. Deiminated on Arg-4 in granulocytes upon calcium entry. Post-translationally, monoubiquitination of Lys-120 (H2AK119Ub) by RING1, TRIM37 and RNF2/RING2 complex gives a specific tag for epigenetic transcriptional repression and participates in X chromosome inactivation of female mammals. It is involved in the initiation of both imprinted and random X inactivation. Ubiquitinated H2A is enriched in inactive X chromosome chromatin. Ubiquitination of H2A functions downstream of methylation of 'Lys-27' of histone H3 (H3K27me). H2AK119Ub by RNF2/RING2 can also be induced by ultraviolet and may be involved in DNA repair. Following DNA double-strand breaks (DSBs), it is ubiquitinated through 'Lys-63' linkage of ubiquitin moieties by the E2 ligase UBE2N and the E3 ligases RNF8 and RNF168, leading to the recruitment of repair proteins to sites of DNA damage. Ubiquitination at Lys-14 and Lys-16 (H2AK13Ub and H2AK15Ub, respectively) in response to DNA damage is initiated by RNF168 that mediates monoubiquitination at these 2 sites, and 'Lys-63'-linked ubiquitin are then conjugated to monoubiquitin; RNF8 is able to extend 'Lys-63'-linked ubiquitin chains in vitro. H2AK119Ub and ionizing radiation-induced 'Lys-63'-linked ubiquitination (H2AK13Ub and H2AK15Ub) are distinct events. In terms of processing, phosphorylation on Ser-2 (H2AS1ph) is enhanced during mitosis. Phosphorylation on Ser-2 by RPS6KA5/MSK1 directly represses transcription. Acetylation of H3 inhibits Ser-2 phosphorylation by RPS6KA5/MSK1. Phosphorylation at Thr-121 (H2AT120ph) by DCAF1 is present in the regulatory region of many tumor suppresor genes and down-regulates their transcription. Symmetric dimethylation on Arg-4 by the PRDM1/PRMT5 complex may play a crucial role in the germ-cell lineage. Post-translationally, glutamine methylation at Gln-105 (H2AQ104me) by FBL is specifically dedicated to polymerase I. It is present at 35S ribosomal DNA locus and impairs binding of the FACT complex. In terms of processing, crotonylation (Kcr) is specifically present in male germ cells and marks testis-specific genes in post-meiotic cells, including X-linked genes that escape sex chromosome inactivation in haploid cells. Crotonylation marks active promoters and enhancers and confers resistance to transcriptional repressors. It is also associated with post-meiotically activated genes on autosomes. Lactylated in macrophages by EP300/P300 by using lactoyl-CoA directly derived from endogenous or exogenous lactate, leading to stimulates gene transcription.

It localises to the nucleus. The protein localises to the chromosome. Functionally, core component of nucleosome. Nucleosomes wrap and compact DNA into chromatin, limiting DNA accessibility to the cellular machineries which require DNA as a template. Histones thereby play a central role in transcription regulation, DNA repair, DNA replication and chromosomal stability. DNA accessibility is regulated via a complex set of post-translational modifications of histones, also called histone code, and nucleosome remodeling. The chain is Histone H2A type 1 from Rattus norvegicus (Rat).